The sequence spans 96 residues: Co-chaperonin GroES (96 aa).

The protein belongs to the GroES chaperonin family. As to quaternary structure, heptamer of 7 subunits arranged in a ring. Interacts with the chaperonin GroEL.

It localises to the cytoplasm. Together with the chaperonin GroEL, plays an essential role in assisting protein folding. The GroEL-GroES system forms a nano-cage that allows encapsulation of the non-native substrate proteins and provides a physical environment optimized to promote and accelerate protein folding. GroES binds to the apical surface of the GroEL ring, thereby capping the opening of the GroEL channel. The chain is Co-chaperonin GroES from Leptospira borgpetersenii serovar Hardjo-bovis (strain JB197).